We begin with the raw amino-acid sequence, 376 residues long: Chaperone protein DnaJ (376 aa).

In terms of domain architecture, J spans 5–69 (DYYEVLGVSK…QKRAQYDQYG (65 aa)). A CR-type zinc finger spans residues 133–215 (GKDAEIEIPR…CHGKGRVTKT (83 aa)). 8 residues coordinate Zn(2+): Cys146, Cys149, Cys163, Cys166, Cys189, Cys192, Cys203, and Cys206. CXXCXGXG motif repeat units follow at residues 146–153 (CDTCHGSG), 163–170 (CSHCGGKG), 189–196 (CQYCNGTG), and 203–210 (CPTCHGKG).

The protein belongs to the DnaJ family. As to quaternary structure, homodimer. It depends on Zn(2+) as a cofactor.

It localises to the cytoplasm. Functionally, participates actively in the response to hyperosmotic and heat shock by preventing the aggregation of stress-denatured proteins and by disaggregating proteins, also in an autonomous, DnaK-independent fashion. Unfolded proteins bind initially to DnaJ; upon interaction with the DnaJ-bound protein, DnaK hydrolyzes its bound ATP, resulting in the formation of a stable complex. GrpE releases ADP from DnaK; ATP binding to DnaK triggers the release of the substrate protein, thus completing the reaction cycle. Several rounds of ATP-dependent interactions between DnaJ, DnaK and GrpE are required for fully efficient folding. Also involved, together with DnaK and GrpE, in the DNA replication of plasmids through activation of initiation proteins. This Listeria monocytogenes serotype 4b (strain CLIP80459) protein is Chaperone protein DnaJ.